Here is a 428-residue protein sequence, read N- to C-terminus: C4-dicarboxylate transport protein 1 (428 aa).

8 consecutive transmembrane segments (helical) span residues 5 to 27 (FYKI…GHFE), 42 to 64 (IQLI…IAGM), 77 to 99 (ALLY…GHIF), 150 to 167 (ILQI…LSAM), 188 to 210 (IVHV…TIGK), 225 to 247 (TFYL…LTGF), 314 to 336 (IFIS…LAVA), and 351 to 373 (FITL…VLIL).

The protein belongs to the dicarboxylate/amino acid:cation symporter (DAACS) (TC 2.A.23) family.

The protein resides in the cell inner membrane. In terms of biological role, responsible for the transport of dicarboxylates such as succinate, fumarate, and malate from the periplasm across the membrane. This is C4-dicarboxylate transport protein 1 (dctA1) from Ralstonia nicotianae (strain ATCC BAA-1114 / GMI1000) (Ralstonia solanacearum).